A 557-amino-acid polypeptide reads, in one-letter code: Dihydroxy-acid dehydratase (557 aa).

C47 contacts [2Fe-2S] cluster. D79 contacts Mg(2+). C120 lines the [2Fe-2S] cluster pocket. Mg(2+)-binding residues include D121 and K122. At K122 the chain carries N6-carboxylysine. C192 contributes to the [2Fe-2S] cluster binding site. E444 is a binding site for Mg(2+). The active-site Proton acceptor is the S470.

Belongs to the IlvD/Edd family. As to quaternary structure, homodimer. [2Fe-2S] cluster is required as a cofactor. It depends on Mg(2+) as a cofactor.

The enzyme catalyses (2R)-2,3-dihydroxy-3-methylbutanoate = 3-methyl-2-oxobutanoate + H2O. It catalyses the reaction (2R,3R)-2,3-dihydroxy-3-methylpentanoate = (S)-3-methyl-2-oxopentanoate + H2O. It participates in amino-acid biosynthesis; L-isoleucine biosynthesis; L-isoleucine from 2-oxobutanoate: step 3/4. The protein operates within amino-acid biosynthesis; L-valine biosynthesis; L-valine from pyruvate: step 3/4. Functions in the biosynthesis of branched-chain amino acids. Catalyzes the dehydration of (2R,3R)-2,3-dihydroxy-3-methylpentanoate (2,3-dihydroxy-3-methylvalerate) into 2-oxo-3-methylpentanoate (2-oxo-3-methylvalerate) and of (2R)-2,3-dihydroxy-3-methylbutanoate (2,3-dihydroxyisovalerate) into 2-oxo-3-methylbutanoate (2-oxoisovalerate), the penultimate precursor to L-isoleucine and L-valine, respectively. The polypeptide is Dihydroxy-acid dehydratase (Synechococcus sp. (strain CC9605)).